Reading from the N-terminus, the 135-residue chain is C-type lectin LmsL (135 aa).

Disulfide bonds link Cys-3/Cys-14, Cys-31/Cys-131, Cys-38/Cys-133, and Cys-106/Cys-123. The 123-residue stretch at 10–132 (MNGLCYKIFD…CESKNAFLCQ (123 aa)) folds into the C-type lectin domain. Ca(2+) is bound by residues Gln-96, Asp-98, Glu-104, Asn-119, and Asp-120. The Galactose-binding signature appears at 96–98 (QPD).

It belongs to the true venom lectin family. In terms of assembly, homodimer; disulfide-linked. In terms of tissue distribution, expressed by the venom gland.

The protein resides in the secreted. Functionally, galactose-binding protein which recognizes specific carbohydrate structures and agglutinates a variety of animal cells by binding to cell-surface glycoproteins and glycolipids. Is a calcium-dependent lectin. Shows high hemagglutinating activity, that is inhibited by lactose, galactose and inositol. This is C-type lectin LmsL from Lachesis stenophrys (Central American bushmaster).